Reading from the N-terminus, the 263-residue chain is Purine nucleoside phosphorylase SAR1163 (263 aa).

3 residues coordinate Zn(2+): H79, C124, and H141.

Belongs to the purine nucleoside phosphorylase YfiH/LACC1 family. As to quaternary structure, homodimer. Cu(2+) serves as cofactor. The cofactor is Zn(2+).

It catalyses the reaction adenosine + phosphate = alpha-D-ribose 1-phosphate + adenine. The catalysed reaction is S-methyl-5'-thioadenosine + phosphate = 5-(methylsulfanyl)-alpha-D-ribose 1-phosphate + adenine. It carries out the reaction inosine + phosphate = alpha-D-ribose 1-phosphate + hypoxanthine. The enzyme catalyses adenosine + H2O + H(+) = inosine + NH4(+). Functionally, purine nucleoside enzyme that catalyzes the phosphorolysis of adenosine and inosine nucleosides, yielding D-ribose 1-phosphate and the respective free bases, adenine and hypoxanthine. Also catalyzes the phosphorolysis of S-methyl-5'-thioadenosine into adenine and S-methyl-5-thio-alpha-D-ribose 1-phosphate. Also has adenosine deaminase activity. The chain is Purine nucleoside phosphorylase SAR1163 from Staphylococcus aureus (strain MRSA252).